Consider the following 240-residue polypeptide: NAD(P)H-hydrate epimerase (240 aa).

The region spanning 15–224 (AQEIDAELMG…SYNLKLPCYP (210 aa)) is the YjeF N-terminal domain. Residue 66 to 70 (NQGGD) participates in (6S)-NADPHX binding. Residues Gln67 and Asp129 each coordinate K(+). Residues 133–139 (GFSFHSE) and Asp162 contribute to the (6S)-NADPHX site. Ser165 serves as a coordination point for K(+).

Belongs to the NnrE/AIBP family. The cofactor is K(+).

It is found in the cytoplasm. It localises to the mitochondrion. It catalyses the reaction (6R)-NADHX = (6S)-NADHX. The enzyme catalyses (6R)-NADPHX = (6S)-NADPHX. Catalyzes the epimerization of the S- and R-forms of NAD(P)HX, a damaged form of NAD(P)H that is a result of enzymatic or heat-dependent hydration. This is a prerequisite for the S-specific NAD(P)H-hydrate dehydratase to allow the repair of both epimers of NAD(P)HX. This is NAD(P)H-hydrate epimerase from Puccinia graminis f. sp. tritici (strain CRL 75-36-700-3 / race SCCL) (Black stem rust fungus).